A 141-amino-acid polypeptide reads, in one-letter code: Putative pre-16S rRNA nuclease (141 aa).

The protein belongs to the YqgF nuclease family.

Its subcellular location is the cytoplasm. Could be a nuclease involved in processing of the 5'-end of pre-16S rRNA. The polypeptide is Putative pre-16S rRNA nuclease (Acetivibrio thermocellus (strain ATCC 27405 / DSM 1237 / JCM 9322 / NBRC 103400 / NCIMB 10682 / NRRL B-4536 / VPI 7372) (Clostridium thermocellum)).